The sequence spans 552 residues: Arginine--tRNA ligase (552 aa).

Positions 123-133 match the 'HIGH' region motif; that stretch reads ANPTGPLTIGR.

This sequence belongs to the class-I aminoacyl-tRNA synthetase family. Monomer.

It is found in the cytoplasm. It carries out the reaction tRNA(Arg) + L-arginine + ATP = L-arginyl-tRNA(Arg) + AMP + diphosphate. The polypeptide is Arginine--tRNA ligase (Chlorobium phaeovibrioides (strain DSM 265 / 1930) (Prosthecochloris vibrioformis (strain DSM 265))).